Here is a 335-residue protein sequence, read N- to C-terminus: tRNA N6-adenosine threonylcarbamoyltransferase (335 aa).

Fe cation-binding residues include His107 and His111. Residues 129 to 133, Asp162, Gly175, and Asn268 contribute to the substrate site; that span reads LVSGG. Asp296 is a binding site for Fe cation.

Belongs to the KAE1 / TsaD family. Fe(2+) is required as a cofactor.

Its subcellular location is the cytoplasm. The enzyme catalyses L-threonylcarbamoyladenylate + adenosine(37) in tRNA = N(6)-L-threonylcarbamoyladenosine(37) in tRNA + AMP + H(+). Required for the formation of a threonylcarbamoyl group on adenosine at position 37 (t(6)A37) in tRNAs that read codons beginning with adenine. Is involved in the transfer of the threonylcarbamoyl moiety of threonylcarbamoyl-AMP (TC-AMP) to the N6 group of A37, together with TsaE and TsaB. TsaD likely plays a direct catalytic role in this reaction. The polypeptide is tRNA N6-adenosine threonylcarbamoyltransferase (Campylobacter fetus subsp. fetus (strain 82-40)).